A 527-amino-acid chain; its full sequence is Protein SDS24 (527 aa).

Low complexity-rich tracts occupy residues 1–22 (MAST…LPTS) and 55–74 (TPPT…TPAP). Residues 1–75 (MASTSNTFPP…PGCAATPAPL (75 aa)) form a disordered region. S94 is modified (phosphoserine). CBS domains are found at residues 114-175 (IEQN…KITV), 198-256 (LTPK…NARS), 283-342 (TSRQ…QYPL), and 443-512 (LNSH…GNKE). The span at 424–447 (AQSSANGATPMSKSSSSTSLNSHS) shows a compositional bias: low complexity. 2 disordered regions span residues 424 to 478 (AQSS…TNTP) and 508 to 527 (TGNK…SIAM). Phosphoserine is present on residues S458 and S524.

It belongs to the SDS23 family.

The protein localises to the cytoplasm. Its subcellular location is the nucleus. Its function is as follows. Involved in DNA replication and cell separation during budding. This chain is Protein SDS24 (SDS24), found in Saccharomyces cerevisiae (strain YJM789) (Baker's yeast).